The sequence spans 207 residues: Ribosomal RNA small subunit methyltransferase G (207 aa).

S-adenosyl-L-methionine-binding positions include Gly-73, Leu-78, 124–125, and Arg-139; that span reads VE.

The protein belongs to the methyltransferase superfamily. RNA methyltransferase RsmG family.

It localises to the cytoplasm. It carries out the reaction guanosine(527) in 16S rRNA + S-adenosyl-L-methionine = N(7)-methylguanosine(527) in 16S rRNA + S-adenosyl-L-homocysteine. Functionally, specifically methylates the N7 position of guanine in position 527 of 16S rRNA. This is Ribosomal RNA small subunit methyltransferase G from Escherichia coli (strain SMS-3-5 / SECEC).